The following is a 226-amino-acid chain: Biosynthetic peptidoglycan transglycosylase (226 aa).

The helical transmembrane segment at 8-28 (FFGWTWFVMWRFLLLLALLLL) threads the bilayer.

The protein belongs to the glycosyltransferase 51 family.

The protein resides in the cell inner membrane. The enzyme catalyses [GlcNAc-(1-&gt;4)-Mur2Ac(oyl-L-Ala-gamma-D-Glu-L-Lys-D-Ala-D-Ala)](n)-di-trans,octa-cis-undecaprenyl diphosphate + beta-D-GlcNAc-(1-&gt;4)-Mur2Ac(oyl-L-Ala-gamma-D-Glu-L-Lys-D-Ala-D-Ala)-di-trans,octa-cis-undecaprenyl diphosphate = [GlcNAc-(1-&gt;4)-Mur2Ac(oyl-L-Ala-gamma-D-Glu-L-Lys-D-Ala-D-Ala)](n+1)-di-trans,octa-cis-undecaprenyl diphosphate + di-trans,octa-cis-undecaprenyl diphosphate + H(+). Its pathway is cell wall biogenesis; peptidoglycan biosynthesis. In terms of biological role, peptidoglycan polymerase that catalyzes glycan chain elongation from lipid-linked precursors. This Shewanella frigidimarina (strain NCIMB 400) protein is Biosynthetic peptidoglycan transglycosylase.